The following is a 331-amino-acid chain: Pantothenate kinase (331 aa).

109-116 (GSVAVGKS) is an ATP binding site.

The protein belongs to the prokaryotic pantothenate kinase family.

It is found in the cytoplasm. The catalysed reaction is (R)-pantothenate + ATP = (R)-4'-phosphopantothenate + ADP + H(+). It functions in the pathway cofactor biosynthesis; coenzyme A biosynthesis; CoA from (R)-pantothenate: step 1/5. This chain is Pantothenate kinase, found in Rhizobium meliloti (strain 1021) (Ensifer meliloti).